The chain runs to 748 residues: Cytosolic phospholipase A2 (748 aa).

A phospholipid binding region spans residues 1 to 178 (MSFIDPYQHI…MKKLLGPKKS (178 aa)). Ser2 carries the phosphoserine modification. Positions 6 to 122 (PYQHIIVEHQ…KVGEKKEVPF (117 aa)) constitute a C2 domain. Residues Asp40, Thr41, Asp43, Asn65, Asp93, Ala94, and Asn95 each coordinate Ca(2+). The PLA2c domain maps to 140-739 (SCPDLRFSMA…SNVEARKFFN (600 aa)). Ser228 functions as the Nucleophile in the catalytic mechanism. A Phosphothreonine modification is found at Thr268. The interval 427-458 (KHIVSNDSSDSDDEAQGPKGTENEEAEKEYQS) is disordered. Residues Ser434, Ser435, and Ser437 each carry the phosphoserine modification. Ser505 carries the post-translational modification Phosphoserine; by MAPK. Ser515 is subject to Phosphoserine. Lys540 is covalently cross-linked (Glycyl lysine isopeptide (Lys-Gly) (interchain with G-Cter in SUMO2)). Asp548 acts as the Proton acceptor in catalysis. Lys605 is covalently cross-linked (Glycyl lysine isopeptide (Lys-Gly) (interchain with G-Cter in SUMO2)). Phosphoserine is present on residues Ser726 and Ser728.

In terms of assembly, interacts with KAT5. Phosphorylated at both Ser-505 and Ser-726 in response to mitogenic stimuli. In terms of tissue distribution, expressed in various organs including uterus, kidney, spleen, liver, heart, lung and brain (at protein level).

It is found in the cytoplasm. Its subcellular location is the golgi apparatus membrane. The protein localises to the nucleus envelope. The enzyme catalyses a 1,2-diacyl-sn-glycero-3-phosphocholine + H2O = a 1-acyl-sn-glycero-3-phosphocholine + a fatty acid + H(+). It carries out the reaction a 1-O-alkyl-2-acyl-sn-glycero-3-phosphocholine + H2O = a 1-O-alkyl-sn-glycero-3-phosphocholine + a fatty acid + H(+). The catalysed reaction is a 1-acyl-sn-glycero-3-phosphocholine + H2O = sn-glycerol 3-phosphocholine + a fatty acid + H(+). It catalyses the reaction 1-hexadecanoyl-2-(5Z,8Z,11Z,14Z-eicosatetraenoyl)-sn-glycero-3-phosphocholine + H2O = 1-hexadecanoyl-sn-glycero-3-phosphocholine + (5Z,8Z,11Z,14Z)-eicosatetraenoate + H(+). The enzyme catalyses 1,2-di-(5Z,8Z,11Z,14Z-eicosatetraenoyl)-sn-glycero-3-phosphocholine + H2O = 1-(5Z,8Z,11Z,14Z-eicosatetraenoyl)-sn-glycero-3-phosphocholine + (5Z,8Z,11Z,14Z)-eicosatetraenoate + H(+). It carries out the reaction 1-octadecanoyl-2-(5Z,8Z,11Z,14Z-eicosatetraenoyl)-sn-glycero-3-phosphocholine + H2O = 1-octadecanoyl-sn-glycero-3-phosphocholine + (5Z,8Z,11Z,14Z)-eicosatetraenoate + H(+). The catalysed reaction is 1-hexadecanoyl-2-(9Z,12Z-octadecadienoyl)-sn-glycero-3-phosphocholine + H2O = (9Z,12Z)-octadecadienoate + 1-hexadecanoyl-sn-glycero-3-phosphocholine + H(+). It catalyses the reaction 1-octadecanoyl-2-(9Z,12Z,15Z-octadecatrienoyl)-sn-glycero-3-phosphocholine + H2O = (9Z,12Z,15Z)-octadecatrienoate + 1-octadecanoyl-sn-glycero-3-phosphocholine + H(+). The enzyme catalyses 1-(5Z,8Z,11Z,14Z-eicosatetraenoyl)-2-hexadecanoyl-sn-glycero-3-phosphocholine + H2O = 1-(5Z,8Z,11Z,14Z-eicosatetraenoyl)-sn-glycero-3-phosphocholine + hexadecanoate + H(+). It carries out the reaction 1-O-hexadecyl-2-(5Z,8Z,11Z,14Z)-eicosatetraenoyl-sn-glycero-3-phosphocholine + H2O = 1-O-hexadecyl-sn-glycero-3-phosphocholine + (5Z,8Z,11Z,14Z)-eicosatetraenoate + H(+). The catalysed reaction is 1,2-di-(9Z-octadecenoyl)-sn-glycero-3-phospho-(1'-sn-glycerol) + H2O = 1-(9Z-octadecenoyl)-sn-glycero-3-phospho-(1'-sn-glycerol) + (9Z)-octadecenoate + H(+). It catalyses the reaction 1-octadecanoyl-2-(5Z,8Z,11Z,14Z-eicosatetraenoyl)-sn-glycero-3-phosphate + H2O = 1-octadecanoyl-sn-glycero-3-phosphate + (5Z,8Z,11Z,14Z)-eicosatetraenoate + H(+). The enzyme catalyses 1-hexadecanoyl-sn-glycero-3-phosphocholine + H2O = sn-glycerol 3-phosphocholine + hexadecanoate + H(+). It carries out the reaction 2-(prostaglandin E2)-sn-glycero-3-phosphoethanolamine + H2O = sn-glycero-3-phosphoethanolamine + prostaglandin E2 + H(+). The catalysed reaction is 2-[(15S)-hydroxy-(5Z,8Z,11Z,13E)-eicosatetraenoyl]-sn-glycero-3-phosphocholine + H2O = (15S)-hydroxy-(5Z,8Z,11Z,13E)-eicosatetraenoate + sn-glycerol 3-phosphocholine + H(+). It catalyses the reaction 2-[(15R)-hydroxy-(5Z,8Z,11Z,13E)-eicosatetraenoyl]-sn-glycero-3-phosphocholine + H2O = (15R)-hydroxy-(5Z,8Z,11Z,13E)-eicosatetraenoate + sn-glycerol 3-phosphocholine + H(+). The enzyme catalyses 2-(prostaglandin E2)-sn-glycero-3-phosphocholine + H2O = prostaglandin E2 + sn-glycerol 3-phosphocholine + H(+). It carries out the reaction 2-[(11R)-hydroxy-(5Z,8Z,12E,14Z)-eicosatetraenoyl]-sn-glycero-3-phosphocholine + H2O = (11R)-hydroxy-(5Z,8Z,12E,14Z)-eicosatetraenoate + sn-glycerol 3-phosphocholine + H(+). The catalysed reaction is 1-(5Z,8Z,11Z,14Z-eicosatetraenoyl)-2-O-hexadecyl-sn-glycero-3-phosphocholine + H2O = 2-O-hexadecyl-sn-glycero-3-phosphocholine + (5Z,8Z,11Z,14Z)-eicosatetraenoate + H(+). It catalyses the reaction 1-octadecanoyl-2-(5Z,8Z,11Z,14Z-eicosatetraenoyl)-sn-glycero-3-phosphocholine + glycerol = 1-(5Z,8Z,11Z,14Z-eicosatetraenoyl)-glycerol + 1-octadecanoyl-sn-glycero-3-phosphocholine. The enzyme catalyses 1-octadecanoyl-2-(9Z,12Z,15Z-octadecatrienoyl)-sn-glycero-3-phosphocholine + glycerol = 1-(9Z,12Z,15Z-octadecatrienoyl)-glycerol + 1-octadecanoyl-sn-glycero-3-phosphocholine. It participates in membrane lipid metabolism; glycerophospholipid metabolism. The protein operates within lipid metabolism; arachidonate metabolism. Its pathway is lipid metabolism; prostaglandin biosynthesis. It functions in the pathway lipid metabolism; leukotriene B4 biosynthesis. With respect to regulation, activated by cytosolic calcium, which is necessary for binding to membrane lipids. Activated by phosphorylation in response to mitogenic stimuli. Stimulated by agonists such as ATP and thrombin. Its function is as follows. Has primarily calcium-dependent phospholipase and lysophospholipase activities, with a major role in membrane lipid remodeling and biosynthesis of lipid mediators of the inflammatory response. Plays an important role in embryo implantation and parturition through its ability to trigger prostanoid production. Preferentially hydrolyzes the ester bond of the fatty acyl group attached at sn-2 position of phospholipids (phospholipase A2 activity). Selectively hydrolyzes sn-2 arachidonoyl group from membrane phospholipids, providing the precursor for eicosanoid biosynthesis via the cyclooxygenase pathway. In an alternative pathway of eicosanoid biosynthesis, hydrolyzes sn-2 fatty acyl chain of eicosanoid lysophopholipids to release free bioactive eicosanoids. Hydrolyzes the ester bond of the fatty acyl group attached at sn-1 position of phospholipids (phospholipase A1 activity) only if an ether linkage rather than an ester linkage is present at the sn-2 position. This hydrolysis is not stereospecific. Has calcium-independent phospholipase A2 and lysophospholipase activities in the presence of phosphoinositides. Has O-acyltransferase activity. Catalyzes the transfer of fatty acyl chains from phospholipids to a primary hydroxyl group of glycerol (sn-1 or sn-3), potentially contributing to monoacylglycerol synthesis. The chain is Cytosolic phospholipase A2 (Pla2g4a) from Mus musculus (Mouse).